Consider the following 140-residue polypeptide: Immunity protein RhsIC (140 aa).

Functionally, putative immunity protein component of a toxin-immunity protein module, which may function as a cellular contact-dependent growth inhibition (CDI) system. Blocks the toxic effects of expression of the C-terminus (residues 1519-1658) of cognate toxin RhsC in E.coli. The chain is Immunity protein RhsIC (rhsIC) from Dickeya dadantii (strain 3937) (Erwinia chrysanthemi (strain 3937)).